The following is a 1722-amino-acid chain: Lymphocyte antigen 75 (1722 aa).

Positions 1–27 (MRTGWATPRRPAGLLMLLFWFFDLAEP) are cleaved as a signal peptide. At 28 to 1666 (SGRAANDPFT…VVCKVPLGPD (1639 aa)) the chain is on the extracellular side. The 124-residue stretch at 33-156 (NDPFTIVHGN…ESLCDQPYHE (124 aa)) folds into the Ricin B-type lectin domain. The N-linked (GlcNAc...) asparagine glycan is linked to Asn135. The Fibronectin type-II domain maps to 164-211 (SYGRPCEFPFLIDGTWHHDCILDEDHSGPWCATTLNYEYDRKWGICLK). Cystine bridges form between Cys169-Cys194, Cys183-Cys209, Cys247-Cys340, and Cys317-Cys332. One can recognise a C-type lectin 1 domain in the interval 225–341 (QFGSCYQFNT…CEAQLPYVCR (117 aa)). Asn345 and Asn377 each carry an N-linked (GlcNAc...) asparagine glycan. 4 C-type lectin domains span residues 368-486 (NNGF…YVCK), 493-625 (NDAS…ICKK), 652-778 (ASLS…IYLR), and 818-931 (IEGS…FICE). Intrachain disulfides connect Cys389/Cys485 and Cys462/Cys477. A glycan (N-linked (GlcNAc...) asparagine) is linked at Asn529. The cysteines at positions 597 and 614 are disulfide-linked. 2 disulfide bridges follow: Cys840–Cys930 and Cys904–Cys922. Asn843 and Asn865 each carry an N-linked (GlcNAc...) asparagine glycan. Position 933 is a phosphotyrosine (Tyr933). N-linked (GlcNAc...) asparagine glycosylation is found at Asn934, Asn1076, and Asn1103. A C-type lectin 6 domain is found at 958-1091 (FQNKCFLKIK…ERHFVSLCQK (134 aa)). The cysteines at positions 1060 and 1080 are disulfide-linked. In terms of domain architecture, C-type lectin 7 spans 1110 to 1222 (YLNNLYKIIP…DNQPGAICYY (113 aa)). Cys1197 and Cys1211 are oxidised to a cystine. N-linked (GlcNAc...) asparagine glycans are attached at residues Asn1225, Asn1320, and Asn1392. One can recognise a C-type lectin 8 domain in the interval 1251–1374 (FQNCCYNFII…VIEEAVYFHQ (124 aa)). C-type lectin domains follow at residues 1401 to 1513 (YEDG…ICYK) and 1542 to 1661 (YKGH…VCKV). Cys1488 and Cys1502 form a disulfide bridge. 2 N-linked (GlcNAc...) asparagine glycosylation sites follow: Asn1593 and Asn1626. Cys1635 and Cys1650 are oxidised to a cystine. Residues 1667–1691 (YTAIAIIVATLSILVLMGGLIWFLF) traverse the membrane as a helical segment. Over 1692 to 1722 (QRHRLHLAGFSSVRYAQGVNEDEIMLPSFHD) the chain is Cytoplasmic. Residues Ser1703 and Ser1719 each carry the phosphoserine modification.

N-glycosylated. In terms of tissue distribution, expressed in spleen, thymus, colon and peripheral blood lymphocytes. Detected in myeloid and B-lymphoid cell lines. Isoform 2 and isoform 3 are expressed in malignant Hodgkin lymphoma cells called Hodgkin and Reed-Sternberg (HRS) cells.

It localises to the membrane. In terms of biological role, acts as an endocytic receptor to direct captured antigens from the extracellular space to a specialized antigen-processing compartment. Causes reduced proliferation of B-lymphocytes. The polypeptide is Lymphocyte antigen 75 (LY75) (Homo sapiens (Human)).